Here is a 232-residue protein sequence, read N- to C-terminus: Large ribosomal subunit protein uL1 (232 aa).

Belongs to the universal ribosomal protein uL1 family. As to quaternary structure, part of the 50S ribosomal subunit.

Its function is as follows. Binds directly to 23S rRNA. The L1 stalk is quite mobile in the ribosome, and is involved in E site tRNA release. Functionally, protein L1 is also a translational repressor protein, it controls the translation of the L11 operon by binding to its mRNA. The sequence is that of Large ribosomal subunit protein uL1 from Rhizobium meliloti (strain 1021) (Ensifer meliloti).